The following is a 227-amino-acid chain: Cytochrome c oxidase subunit 2 (227 aa).

The Mitochondrial intermembrane portion of the chain corresponds to 1 to 14; the sequence is MAYPMQLGFQDATS. Residues 15 to 45 form a helical membrane-spanning segment; that stretch reads PIMEELLHFHDHTLMIVFLISSLVLYIISLM. Residues 46–59 lie on the Mitochondrial matrix side of the membrane; it reads LTTKLTHTSTMDAQ. Residues 60-87 traverse the membrane as a helical segment; sequence EVETVWTILPAVILIMIALPSLRILYMM. The Mitochondrial intermembrane segment spans residues 88-227; that stretch reads DEINNPSLTV…HFEKWSASML (140 aa). Residues His161, Cys196, Glu198, Cys200, His204, and Met207 each contribute to the Cu cation site. Glu198 lines the Mg(2+) pocket.

This sequence belongs to the cytochrome c oxidase subunit 2 family. Component of the cytochrome c oxidase (complex IV, CIV), a multisubunit enzyme composed of 14 subunits. The complex is composed of a catalytic core of 3 subunits MT-CO1, MT-CO2 and MT-CO3, encoded in the mitochondrial DNA, and 11 supernumerary subunits COX4I, COX5A, COX5B, COX6A, COX6B, COX6C, COX7A, COX7B, COX7C, COX8 and NDUFA4, which are encoded in the nuclear genome. The complex exists as a monomer or a dimer and forms supercomplexes (SCs) in the inner mitochondrial membrane with NADH-ubiquinone oxidoreductase (complex I, CI) and ubiquinol-cytochrome c oxidoreductase (cytochrome b-c1 complex, complex III, CIII), resulting in different assemblies (supercomplex SCI(1)III(2)IV(1) and megacomplex MCI(2)III(2)IV(2)). Found in a complex with TMEM177, COA6, COX18, COX20, SCO1 and SCO2. Interacts with TMEM177 in a COX20-dependent manner. Interacts with COX20. Interacts with COX16. Requires Cu cation as cofactor.

The protein localises to the mitochondrion inner membrane. It carries out the reaction 4 Fe(II)-[cytochrome c] + O2 + 8 H(+)(in) = 4 Fe(III)-[cytochrome c] + 2 H2O + 4 H(+)(out). Component of the cytochrome c oxidase, the last enzyme in the mitochondrial electron transport chain which drives oxidative phosphorylation. The respiratory chain contains 3 multisubunit complexes succinate dehydrogenase (complex II, CII), ubiquinol-cytochrome c oxidoreductase (cytochrome b-c1 complex, complex III, CIII) and cytochrome c oxidase (complex IV, CIV), that cooperate to transfer electrons derived from NADH and succinate to molecular oxygen, creating an electrochemical gradient over the inner membrane that drives transmembrane transport and the ATP synthase. Cytochrome c oxidase is the component of the respiratory chain that catalyzes the reduction of oxygen to water. Electrons originating from reduced cytochrome c in the intermembrane space (IMS) are transferred via the dinuclear copper A center (CU(A)) of subunit 2 and heme A of subunit 1 to the active site in subunit 1, a binuclear center (BNC) formed by heme A3 and copper B (CU(B)). The BNC reduces molecular oxygen to 2 water molecules using 4 electrons from cytochrome c in the IMS and 4 protons from the mitochondrial matrix. In Tragelaphus imberbis (Lesser kudu), this protein is Cytochrome c oxidase subunit 2 (MT-CO2).